Consider the following 190-residue polypeptide: Holliday junction branch migration complex subunit RuvA (190 aa).

Residues 1–64 (MIGKLTGTLL…EDAQLLYGFG (64 aa)) form a domain I region. The interval 65–137 (TAQERQAFRE…LKGKLGADVG (73 aa)) is domain II. The segment at 137 to 141 (GVRAH) is flexible linker. The segment at 142–190 (AANDNQADILQALLALGYNDKEAAAALKALPADVGVSEGIKLALKSLSK) is domain III.

This sequence belongs to the RuvA family. Homotetramer. Forms an RuvA(8)-RuvB(12)-Holliday junction (HJ) complex. HJ DNA is sandwiched between 2 RuvA tetramers; dsDNA enters through RuvA and exits via RuvB. An RuvB hexamer assembles on each DNA strand where it exits the tetramer. Each RuvB hexamer is contacted by two RuvA subunits (via domain III) on 2 adjacent RuvB subunits; this complex drives branch migration. In the full resolvosome a probable DNA-RuvA(4)-RuvB(12)-RuvC(2) complex forms which resolves the HJ.

The protein resides in the cytoplasm. In terms of biological role, the RuvA-RuvB-RuvC complex processes Holliday junction (HJ) DNA during genetic recombination and DNA repair, while the RuvA-RuvB complex plays an important role in the rescue of blocked DNA replication forks via replication fork reversal (RFR). RuvA specifically binds to HJ cruciform DNA, conferring on it an open structure. The RuvB hexamer acts as an ATP-dependent pump, pulling dsDNA into and through the RuvAB complex. HJ branch migration allows RuvC to scan DNA until it finds its consensus sequence, where it cleaves and resolves the cruciform DNA. The chain is Holliday junction branch migration complex subunit RuvA from Acidovorax ebreus (strain TPSY) (Diaphorobacter sp. (strain TPSY)).